We begin with the raw amino-acid sequence, 215 residues long: Adenylate kinase (215 aa).

An ATP-binding site is contributed by 10–15 (GAGKGT). An NMP region spans residues 30–59 (STGDMFRAAMKNNTELGKKAKSFMDNGDLV). Residues Thr-31, Arg-36, 57–59 (DLV), 85–88 (GFPR), and Gln-92 contribute to the AMP site. An LID region spans residues 126–163 (GRWICRTCGKTYHEIYNPPKVPGKCDLDGGELYQREDD). Arg-127 provides a ligand contact to ATP. Zn(2+)-binding residues include Cys-130 and Cys-133. 136 to 137 (TY) lines the ATP pocket. Zn(2+) contacts are provided by Cys-150 and Asp-153. Residues Arg-160 and Arg-171 each coordinate AMP. Gln-199 lines the ATP pocket.

The protein belongs to the adenylate kinase family. As to quaternary structure, monomer.

It is found in the cytoplasm. It carries out the reaction AMP + ATP = 2 ADP. The protein operates within purine metabolism; AMP biosynthesis via salvage pathway; AMP from ADP: step 1/1. Catalyzes the reversible transfer of the terminal phosphate group between ATP and AMP. Plays an important role in cellular energy homeostasis and in adenine nucleotide metabolism. This chain is Adenylate kinase, found in Listeria innocua serovar 6a (strain ATCC BAA-680 / CLIP 11262).